Consider the following 239-residue polypeptide: Small ribosomal subunit protein uS2 (239 aa).

It belongs to the universal ribosomal protein uS2 family.

This chain is Small ribosomal subunit protein uS2, found in Lysinibacillus sphaericus (strain C3-41).